The chain runs to 572 residues: Proline--tRNA ligase (572 aa).

This sequence belongs to the class-II aminoacyl-tRNA synthetase family. ProS type 1 subfamily. Homodimer.

It localises to the cytoplasm. It carries out the reaction tRNA(Pro) + L-proline + ATP = L-prolyl-tRNA(Pro) + AMP + diphosphate. Catalyzes the attachment of proline to tRNA(Pro) in a two-step reaction: proline is first activated by ATP to form Pro-AMP and then transferred to the acceptor end of tRNA(Pro). As ProRS can inadvertently accommodate and process non-cognate amino acids such as alanine and cysteine, to avoid such errors it has two additional distinct editing activities against alanine. One activity is designated as 'pretransfer' editing and involves the tRNA(Pro)-independent hydrolysis of activated Ala-AMP. The other activity is designated 'posttransfer' editing and involves deacylation of mischarged Ala-tRNA(Pro). The misacylated Cys-tRNA(Pro) is not edited by ProRS. This chain is Proline--tRNA ligase, found in Enterococcus faecalis (strain ATCC 700802 / V583).